Here is a 332-residue protein sequence, read N- to C-terminus: Malate dehydrogenase, cytoplasmic (332 aa).

NAD(+)-binding positions include 16–17 (QI), aspartate 43, and glycine 90. Arginine 99 contributes to the oxaloacetate binding site. NAD(+) contacts are provided by glutamine 113 and asparagine 132. The oxaloacetate site is built by asparagine 132, arginine 163, histidine 188, and serine 243. The active-site Proton acceptor is the histidine 188.

Belongs to the LDH/MDH superfamily. MDH type 2 family. In terms of assembly, monomer. Expressed constitutively in roots.

The protein resides in the cell membrane. It catalyses the reaction (S)-malate + NAD(+) = oxaloacetate + NADH + H(+). Functionally, malate dehydrogenase; catalyzes a reversible NAD-dependent dehydrogenase reaction involved in central metabolism and redox homeostasis. The polypeptide is Malate dehydrogenase, cytoplasmic (Zea mays (Maize)).